Here is a 239-residue protein sequence, read N- to C-terminus: LRRN4 C-terminal-like protein (239 aa).

Positions 1–19 are cleaved as a signal peptide; sequence MLGSLSLLWLAAMTTSLVS. At 20-194 the chain is on the extracellular side; sequence QPQILTLEDY…KFIMPPKPVT (175 aa). In terms of domain architecture, Fibronectin type-III spans 82–179; sequence QPEPPRLGEV…EGPENWTGPS (98 aa). Asparagine 132 and asparagine 174 each carry an N-linked (GlcNAc...) asparagine glycan. A helical membrane pass occupies residues 195 to 215; it reads LVYAAVGVGTALALLSCAALV. The Cytoplasmic segment spans residues 216–239; the sequence is WHFCLRERWGCPRRQGMAQASEAL.

It is found in the membrane. This chain is LRRN4 C-terminal-like protein (Lrrn4cl), found in Mus musculus (Mouse).